Here is a 440-residue protein sequence, read N- to C-terminus: Transposon TyH3 Gag polyprotein (440 aa).

3 stretches are compositionally biased toward polar residues: residues 1-23 (MESQ…SVTS), 48-60 (TKAN…TPAS), and 127-152 (QSQF…GNTF). 3 disordered regions span residues 1–93 (MESQ…MMTQ), 126–173 (PQSQ…RPPP), and 352–440 (GSRN…PETY). Positions 153–165 (TDSSSADSDMTST) are enriched in low complexity. Residues 299 to 401 (NNGIHINNKV…NSKSKTARAH (103 aa)) are RNA-binding. Residues 402–418 (NVSTSNNSPSTDNDSIS) show a composition bias toward low complexity. Phosphoserine is present on Ser-416. The span at 419–428 (KSTTEPIQLN) shows a compositional bias: polar residues. Basic and acidic residues predominate over residues 429–440 (NKHDLHLRPETY).

In terms of assembly, homotrimer.

It localises to the cytoplasm. Functionally, capsid protein (CA) is the structural component of the virus-like particle (VLP), forming the shell that encapsulates the retrotransposons dimeric RNA genome. The particles are assembled from trimer-clustered units and there are holes in the capsid shells that allow for the diffusion of macromolecules. CA also has nucleocapsid-like chaperone activity, promoting primer tRNA(i)-Met annealing to the multipartite primer-binding site (PBS), dimerization of Ty1 RNA and initiation of reverse transcription. This Saccharomyces cerevisiae (Baker's yeast) protein is Transposon TyH3 Gag polyprotein (TY1A).